The following is a 458-amino-acid chain: MEKVKIEEIQSTAKKQRIATHTHIKGLGLEPTGIPIKLAAGFVGQLEAREAAGLVVDMIKQKKMAGKALLLAGPPGTGKTALALGISQELGSKVPFCPMVGSEVYSSEVKKTEVLMENFRRAIGLRIKETKEVYEGEVTELSPEETESLTGGYGKSISHVVITLKTVKGTKHLKLDPTIYDALIKEKVAVGDVIYIEANSGAVKRVGRSDAFATEFDLEAEEYVPLPKGEVHKKKEIVQDVTLQDLDAANARPQGGQDILSLMGQMMKPRKTEITDKLRQEINKVVNRYIDEGVAELVPGVLFIDEVHMLDMECFSYLNRALESSLSPIVIFATNRGVCNVRGTDMPSPHGVPIDLLDRLVIIRTQIYDPSEMIQIIAIRAQVEELTVDEECLVLLGEIGQRTSLRHAVQLLSPASIVAKMNGRDNICKADIEEVTSLYLDAKSSAKLLHEQQEKYIS.

Position 73-80 (73-80 (GPPGTGKT)) interacts with ATP.

Belongs to the RuvB family. As to quaternary structure, interacts with FRI, and with FLX and FES1, two component of the transcription activator complex FRI-C. Interacts with the disease resistance genes RPM1 and RPP5.

It localises to the nucleus. The catalysed reaction is ATP + H2O = ADP + phosphate + H(+). In terms of biological role, proposed core component of the chromatin remodeling INO80 complex which is involved in transcriptional regulation, DNA replication and probably DNA repair. Component of the NuA4 histone acetyltransferase complex which is involved in transcriptional activation of select genes principally by acetylation of nucleosomal histones H4 and H2A. Has single-stranded DNA-stimulated ATPase and ATP-dependent DNA helicase (3' to 5') activity suggesting a role in nuclear processes such as recombination and transcription. The sequence is that of RuvB-like protein 1 (RIN1) from Arabidopsis thaliana (Mouse-ear cress).